Consider the following 600-residue polypeptide: Ligand-dependent nuclear receptor corepressor-like protein (600 aa).

3 disordered regions span residues 1-24, 102-122, and 495-519; these read MEKGTDRMAAAAPAPPAAASQCRS, SVIGSSQSTPTEELSSQGQSN, and DGTSENTEDSLDRKDNKQPRKKRGR. Over residues 104–122 the composition is skewed to polar residues; the sequence is IGSSQSTPTEELSSQGQSN. In terms of domain architecture, HTH psq-type spans 514–566; it reads RKKRGRYRQYDHEIMEEAIAMVMSGKMSVSKAQGIYGVPHSTLEYKVKERSGT. Residues 542–562 constitute a DNA-binding region (H-T-H motif); it reads VSKAQGIYGVPHSTLEYKVKE. Residues 581-600 are disordered; the sequence is GLFNMTDSGTGSCKTSSKPV. Residues 583 to 600 are compositionally biased toward polar residues; that stretch reads FNMTDSGTGSCKTSSKPV.

The protein localises to the nucleus. Its function is as follows. May act as transcription activator that binds DNA elements with the sequence 5'-CCCTATCGATCGATCTCTACCT-3'. The polypeptide is Ligand-dependent nuclear receptor corepressor-like protein (LCORL) (Gallus gallus (Chicken)).